Consider the following 365-residue polypeptide: Phospho-N-acetylmuramoyl-pentapeptide-transferase (365 aa).

10 helical membrane-spanning segments follow: residues 22 to 42 (YISV…LALG), 74 to 94 (TMGG…WGDL), 95 to 115 (TSIY…IGFF), 134 to 154 (KFAL…YLLS), 168 to 188 (SLYI…IING), 201 to 221 (GLAI…AYIE), 240 to 260 (LAEV…FLWF), 267 to 287 (VFMG…IAVM), 292 to 312 (LIFF…MLQV), and 342 to 362 (KVVI…LAAI).

It belongs to the glycosyltransferase 4 family. MraY subfamily. Requires Mg(2+) as cofactor.

The protein resides in the cell inner membrane. It catalyses the reaction UDP-N-acetyl-alpha-D-muramoyl-L-alanyl-gamma-D-glutamyl-meso-2,6-diaminopimeloyl-D-alanyl-D-alanine + di-trans,octa-cis-undecaprenyl phosphate = di-trans,octa-cis-undecaprenyl diphospho-N-acetyl-alpha-D-muramoyl-L-alanyl-D-glutamyl-meso-2,6-diaminopimeloyl-D-alanyl-D-alanine + UMP. The protein operates within cell wall biogenesis; peptidoglycan biosynthesis. Catalyzes the initial step of the lipid cycle reactions in the biosynthesis of the cell wall peptidoglycan: transfers peptidoglycan precursor phospho-MurNAc-pentapeptide from UDP-MurNAc-pentapeptide onto the lipid carrier undecaprenyl phosphate, yielding undecaprenyl-pyrophosphoryl-MurNAc-pentapeptide, known as lipid I. The polypeptide is Phospho-N-acetylmuramoyl-pentapeptide-transferase (Francisella tularensis subsp. novicida (strain U112)).